Consider the following 150-residue polypeptide: Deoxyuridine 5'-triphosphate nucleotidohydrolase (150 aa).

Residues 70–72, Asn-82, 86–88, and Met-96 each bind substrate; these read RSG and LID.

The protein belongs to the dUTPase family. Mg(2+) serves as cofactor.

It carries out the reaction dUTP + H2O = dUMP + diphosphate + H(+). Its pathway is pyrimidine metabolism; dUMP biosynthesis; dUMP from dCTP (dUTP route): step 2/2. Functionally, this enzyme is involved in nucleotide metabolism: it produces dUMP, the immediate precursor of thymidine nucleotides and it decreases the intracellular concentration of dUTP so that uracil cannot be incorporated into DNA. This chain is Deoxyuridine 5'-triphosphate nucleotidohydrolase, found in Baumannia cicadellinicola subsp. Homalodisca coagulata.